Consider the following 553-residue polypeptide: Serine protease 53 (553 aa).

Positions 1–23 (MKWCWGPVLLIAGATVLMEGLQA) are cleaved as a signal peptide. Peptidase S1 domains follow at residues 24-273 (AQRA…ARVQ) and 294-526 (VACG…SLDW). Positions 27–46 (ACGQRGPGPPKPQEGNTVPG) are disordered. Cys-62 and Cys-78 form a disulfide bridge. Active-site charge relay system residues include His-77 and Asp-128. Intrachain disulfides connect Cys-158–Cys-230, Cys-187–Cys-209, Cys-220–Cys-249, and Cys-326–Cys-342. Catalysis depends on charge relay system residues Ser-224, His-341, and Asp-382. Cystine bridges form between Cys-444–Cys-464 and Cys-474–Cys-502. Ser-478 acts as the Charge relay system in catalysis.

This sequence belongs to the peptidase S1 family. As to expression, predominantly detected in testis, liver, heart and ovary, as well as in several tumor cell lines.

It is found in the secreted. In terms of biological role, in vitro can degrade the fibrinogen alpha chain of as well as pro-urokinase-type plasminogen activator. The chain is Serine protease 53 (PRSS53) from Homo sapiens (Human).